Reading from the N-terminus, the 237-residue chain is tRNA1(Val) (adenine(37)-N6)-methyltransferase (237 aa).

The protein belongs to the methyltransferase superfamily. tRNA (adenine-N(6)-)-methyltransferase family.

Its subcellular location is the cytoplasm. It catalyses the reaction adenosine(37) in tRNA1(Val) + S-adenosyl-L-methionine = N(6)-methyladenosine(37) in tRNA1(Val) + S-adenosyl-L-homocysteine + H(+). Specifically methylates the adenine in position 37 of tRNA(1)(Val) (anticodon cmo5UAC). This chain is tRNA1(Val) (adenine(37)-N6)-methyltransferase, found in Tolumonas auensis (strain DSM 9187 / NBRC 110442 / TA 4).